The chain runs to 131 residues: MRHRVKRHRLGRYGSHRKSLLRNLSREIVEHGSIVTTTAKAKALKILMDKLVSKAIEAATTDDKAKSVHLRRQINAVLGDRRLTNKLVDEIAKNYVGRHGGYVRVLRIGFRRGDAAEMSLVQLVEASSQEG.

The protein belongs to the bacterial ribosomal protein bL17 family. In terms of assembly, part of the 50S ribosomal subunit. Contacts protein L32.

This is Large ribosomal subunit protein bL17 from Thermotoga sp. (strain RQ2).